The primary structure comprises 720 residues: Zinc finger protein 408 (720 aa).

The disordered stretch occupies residues 201–350; that stretch reads VQQEVASPGE…GPAGSSPKQG (150 aa). The segment covering 275–285 has biased composition (polar residues); that stretch reads LQSNSATQQDP. Over residues 287 to 296 the composition is skewed to low complexity; the sequence is GSGASFSSSA. Threonine 322 carries the post-translational modification Phosphothreonine. 10 consecutive C2H2-type zinc fingers follow at residues 353–375, 381–403, 409–431, 437–459, 468–490, 496–518, 524–546, 551–573, 579–601, and 607–629; these read YRCGECGKAFLQLCHLKKHAFVH, FLCTECGKSYSSEESFKAHMLGH, FPCPQCDKAYGTQRDLKEHQVVH, FACDQCGKAFARRPSLRLHRKTH, CPCPVCGRPLANQGSLRNHMRLH, FLCPHCGRAFRQRGNLRGHLRLH, YRCPHCADAFPQLPELRRHLISH, HLCPVCGKALRDPHTLRAHERLH, FPCPQCGRAYTLATKLRRHLKSH, and YRCPTCGMGYTLPQSLRRHQLSH.

In terms of tissue distribution, highest expression is observed in adult retina; abundantly expressed in the fetal eye. In the retina, it is detected in the outer nuclear layer, especially cone and rod photoreceptor cells, ganglion cell layer and both outer and inner plexiform layers (at protein level). Expressed in retinal blood vessels (at protein level).

It localises to the nucleus. Its function is as follows. May be involved in transcriptional regulation. The chain is Zinc finger protein 408 (ZNF408) from Homo sapiens (Human).